Reading from the N-terminus, the 820-residue chain is Trimethylamine-N-oxide reductase (820 aa).

A signal peptide (tat-type signal) is located at residues 1 to 33; that stretch reads MAITRRSFLKGVATTSAASVIGPSLLASASANA. Residue serine 179 participates in Mo-bis(molybdopterin guanine dinucleotide) binding.

The protein belongs to the prokaryotic molybdopterin-containing oxidoreductase family. It depends on Mo-bis(molybdopterin guanine dinucleotide) as a cofactor. Predicted to be exported by the Tat system. The position of the signal peptide cleavage has not been experimentally proven.

It localises to the periplasm. It carries out the reaction trimethylamine + 2 Fe(III)-[cytochrome c] + H2O = trimethylamine N-oxide + 2 Fe(II)-[cytochrome c] + 3 H(+). Reduces trimethylamine-N-oxide (TMAO) into trimethylamine; an anaerobic reaction coupled to energy-yielding reactions. In Vibrio parahaemolyticus serotype O3:K6 (strain RIMD 2210633), this protein is Trimethylamine-N-oxide reductase (torA).